Reading from the N-terminus, the 261-residue chain is Cytochrome c oxidase subunit 3 (261 aa).

Over 1–15 the chain is Mitochondrial matrix; sequence MTHQTHAYHMVNPSP. A helical membrane pass occupies residues 16-34; sequence WPLTGALSALLMTSGLIMW. Residues 35 to 40 lie on the Mitochondrial intermembrane side of the membrane; sequence FHFNST. Residues 41–66 traverse the membrane as a helical segment; it reads TLLMLGLTTNMLTMYQWWRDVIREST. Over 67-72 the chain is Mitochondrial matrix; that stretch reads FQGHHT. The helical transmembrane segment at 73–105 threads the bilayer; sequence PNVQKGLRYGMILFIISEVLFFTGFFWAFYHSS. Over 106 to 128 the chain is Mitochondrial intermembrane; the sequence is LAPTPELGGCWPPTGIHPLNPLE. Residues 129–152 form a helical membrane-spanning segment; sequence VPLLNTSVLLASGVSITWAHHSLM. At 153 to 155 the chain is on the mitochondrial matrix side; sequence EGN. Residues 156–183 traverse the membrane as a helical segment; the sequence is RNHMLQALFITIALGVYFTLLQASEYYE. At 184–190 the chain is on the mitochondrial intermembrane side; that stretch reads APFTISD. Residues 191–223 traverse the membrane as a helical segment; sequence GVYGSTFFVATGFHGLHVIIGSTFLIVCFFRQL. At 224-232 the chain is on the mitochondrial matrix side; that stretch reads KFHFTSSHH. Residues 233–256 form a helical membrane-spanning segment; sequence FGFEAAAWYWHFVDVVWLFLYVSI. Topologically, residues 257-261 are mitochondrial intermembrane; sequence YWWGS.

It belongs to the cytochrome c oxidase subunit 3 family. Component of the cytochrome c oxidase (complex IV, CIV), a multisubunit enzyme composed of 14 subunits. The complex is composed of a catalytic core of 3 subunits MT-CO1, MT-CO2 and MT-CO3, encoded in the mitochondrial DNA, and 11 supernumerary subunits COX4I, COX5A, COX5B, COX6A, COX6B, COX6C, COX7A, COX7B, COX7C, COX8 and NDUFA4, which are encoded in the nuclear genome. The complex exists as a monomer or a dimer and forms supercomplexes (SCs) in the inner mitochondrial membrane with NADH-ubiquinone oxidoreductase (complex I, CI) and ubiquinol-cytochrome c oxidoreductase (cytochrome b-c1 complex, complex III, CIII), resulting in different assemblies (supercomplex SCI(1)III(2)IV(1) and megacomplex MCI(2)III(2)IV(2)).

The protein resides in the mitochondrion inner membrane. The catalysed reaction is 4 Fe(II)-[cytochrome c] + O2 + 8 H(+)(in) = 4 Fe(III)-[cytochrome c] + 2 H2O + 4 H(+)(out). Component of the cytochrome c oxidase, the last enzyme in the mitochondrial electron transport chain which drives oxidative phosphorylation. The respiratory chain contains 3 multisubunit complexes succinate dehydrogenase (complex II, CII), ubiquinol-cytochrome c oxidoreductase (cytochrome b-c1 complex, complex III, CIII) and cytochrome c oxidase (complex IV, CIV), that cooperate to transfer electrons derived from NADH and succinate to molecular oxygen, creating an electrochemical gradient over the inner membrane that drives transmembrane transport and the ATP synthase. Cytochrome c oxidase is the component of the respiratory chain that catalyzes the reduction of oxygen to water. Electrons originating from reduced cytochrome c in the intermembrane space (IMS) are transferred via the dinuclear copper A center (CU(A)) of subunit 2 and heme A of subunit 1 to the active site in subunit 1, a binuclear center (BNC) formed by heme A3 and copper B (CU(B)). The BNC reduces molecular oxygen to 2 water molecules using 4 electrons from cytochrome c in the IMS and 4 protons from the mitochondrial matrix. The sequence is that of Cytochrome c oxidase subunit 3 (MT-CO3) from Gazella bennettii (Chinkara).